The primary structure comprises 131 residues: D-ribose pyranase (131 aa).

The active-site Proton donor is the His-20. Substrate is bound by residues Asp-28, His-98, and 120 to 122; that span reads YAN.

Belongs to the RbsD / FucU family. RbsD subfamily. Homodecamer.

It localises to the cytoplasm. The catalysed reaction is beta-D-ribopyranose = beta-D-ribofuranose. It functions in the pathway carbohydrate metabolism; D-ribose degradation; D-ribose 5-phosphate from beta-D-ribopyranose: step 1/2. Catalyzes the interconversion of beta-pyran and beta-furan forms of D-ribose. The chain is D-ribose pyranase from Clostridium botulinum (strain Eklund 17B / Type B).